Here is a 258-residue protein sequence, read N- to C-terminus: MKEVDNLDSIKEEWACETGPPDSQPLNDNQQKDCEYFVDSLFEEAGKAGAKCLSPTEQKKQVDVNIKLWKNGFTVNDDFRSYSDGASQQFLNSIKKGELPSELWGIFDKEEVDVKVEDKKNEVCMSTKPVFQPFSGQGHRLGSATPRIVSKAKSVEVDNKSTLSAVSLNNLEPITRIQIWLANGERTVQRFNVSHRVSHIKDFIEKYQGSQRSPPFALATALPFLRFLDETLTLEEADLKNAVIIQRLQKTAEPFRKL.

The segment covering 1 to 14 (MKEVDNLDSIKEEW) has biased composition (basic and acidic residues). The disordered stretch occupies residues 1 to 30 (MKEVDNLDSIKEEWACETGPPDSQPLNDNQ). A required for interaction with CHRNA3 region spans residues 1 to 152 (MKEVDNLDSI…SATPRIVSKA (152 aa)). Residues 1-165 (MKEVDNLDSI…EVDNKSTLSA (165 aa)) form a required for inhibition of CHRNA3 ubiquitination and translocation of CHRNA3 to the plasma membrane resulting in an increase in acetylcholine-gated nicotinic acetylcholine receptor currents region. Residues 61-125 (QVDVNIKLWK…VEDKKNEVCM (65 aa)) enclose the SEP domain. The tract at residues 168–258 (LNNLEPITRI…QKTAEPFRKL (91 aa)) is required for interaction with VCP. One can recognise a UBX domain in the interval 170–247 (NLEPITRIQI…DLKNAVIIQR (78 aa)).

As to quaternary structure, part of a complex composed of STUB1/CHIP, VCP/p97, CHRNA3, and UBXN2A that modulates the ubiquitination and endoplasmic reticulum-associated degradation (ERAD) of CHRNA3. Within the complex UBXN2A acts as a scaffold protein required for the interaction of CHRNA3 with VCP/p97, this interaction also inhibits CHRNA3 ubiquitination by STUB1/CHIP and subsequently ERAD. Interacts (via SEP domain) with CHRNA3 and interacts (via UBX domain) with VCP/P97; these interactions are required for the interaction of CHRNA3 with the STUB1-VCP-UBXN2A complex. Interacts with HSPA9/MOT-2 (via SBD domain); the interaction inhibits HSPA9/MOT-2 interaction with and degradation of p53, thereby promotes p53 translocation to the nucleus. Interacts with RICTOR. Ubiquitinated. As to expression, expressed in the prefrontal cortex (at protein level). Expressed in the habenula and hippocampus (at protein level). Expressed in peripheral ganglia.

It localises to the golgi apparatus. It is found in the endoplasmic reticulum. Its subcellular location is the perikaryon. The protein resides in the cell projection. The protein localises to the dendrite. It localises to the nucleus. It is found in the cytoplasm. Acts to repress the ubiquitination and subsequent endoplasmic reticulum-associated degradation of CHRNA3 by the STUB1-VCP-UBXN2A complex in cortical neurons. Also acts to promote the translocation of CHRNA3 to the plasma membrane and subsequently increases plasma membrane acetylcholine-gated ion-channel activation. Plays a role in the inhibition of STUB1-mediated TP53 degradation, via its interaction with HSPA9 which acts to inhibit TP53 binding to HSPA9. Positively mediates the ubiquitination and proteosomal degradation of RICTOR, may thereby act as a negative regulator of the mTORC2 pathway. The polypeptide is UBX domain-containing protein 2A (Mus musculus (Mouse)).